Reading from the N-terminus, the 510-residue chain is 2,3-bisphosphoglycerate-independent phosphoglycerate mutase (510 aa).

2 residues coordinate Mn(2+): D14 and S64. The active-site Phosphoserine intermediate is S64. Substrate contacts are provided by residues H125, 155–156 (RD), R187, R193, 259–262 (RADR), and K332. Positions 399, 403, 440, 441, and 459 each coordinate Mn(2+).

This sequence belongs to the BPG-independent phosphoglycerate mutase family. Monomer. Mn(2+) is required as a cofactor.

It carries out the reaction (2R)-2-phosphoglycerate = (2R)-3-phosphoglycerate. Its pathway is carbohydrate degradation; glycolysis; pyruvate from D-glyceraldehyde 3-phosphate: step 3/5. In terms of biological role, catalyzes the interconversion of 2-phosphoglycerate and 3-phosphoglycerate. In Pseudomonas savastanoi pv. phaseolicola (strain 1448A / Race 6) (Pseudomonas syringae pv. phaseolicola (strain 1448A / Race 6)), this protein is 2,3-bisphosphoglycerate-independent phosphoglycerate mutase.